A 187-amino-acid chain; its full sequence is MVRPLNCIVAVSQNMGIGKNGDLPWPPLRNEFKYFQRMTTTSSVEGKQNLVIMGRKTWFSIPEKNRPLKDRINIVLSRELKEPPRGAHFLAKSLDDALRLIEQPELASKVDMVWIVGGSSVYQEAMNQPGHLRLFVTRIMQEFESDTFFPEIDLGKYKLLPEYPGVLSEVQEEKGIKYKFEVYEKKD.

Positions 4 to 185 constitute a DHFR domain; that stretch reads PLNCIVAVSQ…IKYKFEVYEK (182 aa). NADP(+)-binding positions include alanine 10 and 16-22; that span reads GIGKNGD. 31–36 provides a ligand contact to substrate; sequence EFKYFQ. Lysine 33 bears the N6-acetyllysine; alternate mark. Residue lysine 33 is modified to N6-succinyllysine; alternate. Residue 55–57 coordinates NADP(+); that stretch reads RKT. Substrate is bound by residues asparagine 65 and arginine 71. NADP(+) contacts are provided by residues 77 to 79 and 117 to 124; these read SRE and GGSSVYQE.

It belongs to the dihydrofolate reductase family. As to quaternary structure, homodimer.

Its subcellular location is the mitochondrion. The protein resides in the cytoplasm. The catalysed reaction is (6S)-5,6,7,8-tetrahydrofolate + NADP(+) = 7,8-dihydrofolate + NADPH + H(+). It functions in the pathway cofactor biosynthesis; tetrahydrofolate biosynthesis; 5,6,7,8-tetrahydrofolate from 7,8-dihydrofolate: step 1/1. Functionally, key enzyme in folate metabolism. Contributes to the de novo mitochondrial thymidylate biosynthesis pathway. Catalyzes an essential reaction for de novo glycine and purine synthesis, and for DNA precursor synthesis. Binds its own mRNA. This chain is Dihydrofolate reductase (Dhfr), found in Mus musculus (Mouse).